Here is a 297-residue protein sequence, read N- to C-terminus: Transcription factor LRL3 (297 aa).

Residues 59–109 (PDQFHHPQESGGPTMGSQEGLQPQGTVSTTSAPVVRQKPRVRARRGQATDP) are disordered. Residues 73–90 (MGSQEGLQPQGTVSTTSA) show a composition bias toward polar residues. The segment at 105-118 (QATDPHSIAERLRR) is basic motif; degenerate. Residues 105–154 (QATDPHSIAERLRRERIAERMKSLQELVPNTNKTDKASMLDEIIEYVRFL) enclose the bHLH domain. The helix-loop-helix motif stretch occupies residues 119–154 (ERIAERMKSLQELVPNTNKTDKASMLDEIIEYVRFL).

In terms of assembly, homodimer. Expressed in trichomes of the root maturation zone. Detected constitutively in flowers.

It is found in the nucleus. Its function is as follows. Transcription factor that regulates the development of root hairs. Does not seem to be involved in the regulation of sperm cell development. The protein is Transcription factor LRL3 of Arabidopsis thaliana (Mouse-ear cress).